The chain runs to 365 residues: tRNA/tmRNA (uracil-C(5))-methyltransferase (365 aa).

5 residues coordinate S-adenosyl-L-methionine: Q189, Y217, N222, E238, and D298. C323 acts as the Nucleophile in catalysis. E357 (proton acceptor) is an active-site residue.

The protein belongs to the class I-like SAM-binding methyltransferase superfamily. RNA M5U methyltransferase family. TrmA subfamily.

It carries out the reaction uridine(54) in tRNA + S-adenosyl-L-methionine = 5-methyluridine(54) in tRNA + S-adenosyl-L-homocysteine + H(+). The enzyme catalyses uridine(341) in tmRNA + S-adenosyl-L-methionine = 5-methyluridine(341) in tmRNA + S-adenosyl-L-homocysteine + H(+). Dual-specificity methyltransferase that catalyzes the formation of 5-methyluridine at position 54 (m5U54) in all tRNAs, and that of position 341 (m5U341) in tmRNA (transfer-mRNA). This is tRNA/tmRNA (uracil-C(5))-methyltransferase from Shewanella pealeana (strain ATCC 700345 / ANG-SQ1).